Reading from the N-terminus, the 295-residue chain is Bifunctional protein FolD 1 (295 aa).

NADP(+) contacts are provided by residues 165-167 (GKS), isoleucine 190, and isoleucine 231.

The protein belongs to the tetrahydrofolate dehydrogenase/cyclohydrolase family. Homodimer.

The catalysed reaction is (6R)-5,10-methylene-5,6,7,8-tetrahydrofolate + NADP(+) = (6R)-5,10-methenyltetrahydrofolate + NADPH. It carries out the reaction (6R)-5,10-methenyltetrahydrofolate + H2O = (6R)-10-formyltetrahydrofolate + H(+). Its pathway is one-carbon metabolism; tetrahydrofolate interconversion. Catalyzes the oxidation of 5,10-methylenetetrahydrofolate to 5,10-methenyltetrahydrofolate and then the hydrolysis of 5,10-methenyltetrahydrofolate to 10-formyltetrahydrofolate. The chain is Bifunctional protein FolD 1 from Rhizorhabdus wittichii (strain DSM 6014 / CCUG 31198 / JCM 15750 / NBRC 105917 / EY 4224 / RW1) (Sphingomonas wittichii).